The primary structure comprises 311 residues: Putative RNA-binding protein R05D3.8 (311 aa).

In terms of domain architecture, RRM spans 155 to 235 (KRLFVSYFPL…RRAVLKESVK (81 aa)). The span at 261–270 (TPSRPVTSVH) shows a compositional bias: polar residues. The interval 261 to 311 (TPSRPVTSVHASSSASSNHYDPSAAAGYAPLYHQPPESDPLSQCGYGPRKW) is disordered.

The chain is Putative RNA-binding protein R05D3.8 from Caenorhabditis elegans.